Reading from the N-terminus, the 327-residue chain is Zinc transport protein ZntB (327 aa).

Residues 1-273 are Cytoplasmic-facing; the sequence is MEAIKGSDVN…ARRTYTMSLM (273 aa). The helical transmembrane segment at 274 to 294 threads the bilayer; it reads AMVFLPSTFLTGLFGVNLGGI. The Periplasmic segment spans residues 295–300; sequence PGGGWR. The chain crosses the membrane as a helical span at residues 301–321; it reads FGFSLFCILLVVLIGGVTLWL. At 322-327 the chain is on the cytoplasmic side; sequence HRSKWL.

This sequence belongs to the CorA metal ion transporter (MIT) (TC 1.A.35) family.

Its subcellular location is the cell inner membrane. The enzyme catalyses Zn(2+)(out) + H(+)(out) = Zn(2+)(in) + H(+)(in). Its function is as follows. Zinc transporter. Acts as a Zn(2+):proton symporter, which likely mediates zinc ion uptake. This chain is Zinc transport protein ZntB, found in Salmonella agona (strain SL483).